Reading from the N-terminus, the 264-residue chain is Propanediol uptake facilitator PduF (264 aa).

2 helical membrane passes run 10 to 30 (GAEF…LSAL) and 42 to 62 (ICII…GISG). The NPA 1 signature appears at 66 to 68 (NPA). The next 3 membrane-spanning stretches (helical) occupy residues 84 to 104 (VLPY…LAYV), 143 to 163 (VWQA…MIMA), and 179 to 199 (LLIG…TGFA). The NPA 2 signature appears at 201 to 203 (NPA). A helical transmembrane segment spans residues 228 to 248 (IPYFIVPIVAPVIGACAGAAI).

The protein belongs to the MIP/aquaporin (TC 1.A.8) family.

It is found in the cell inner membrane. In terms of biological role, probably facilitates diffusion of 1,2-propanediol (1,2-PD) into the cell. Modeling suggests active transport of 1,2-PD is required at low extracellular concentrations to allow maximal growth and saturation of PduP/PduQ within the bacterial microcompartment (BMC); this protein may be the cellular transporter. Its function is as follows. The 1,2-PD-specific bacterial microcompartment (BMC) concentrates low levels of 1,2-PD catabolic enzymes, concentrates volatile reaction intermediates thus enhancing pathway flux and keeps the level of toxic, mutagenic propionaldehyde low. The sequence is that of Propanediol uptake facilitator PduF from Salmonella typhimurium (strain LT2 / SGSC1412 / ATCC 700720).